The primary structure comprises 557 residues: Dihydroxy-acid dehydratase (557 aa).

Cys50 contacts [2Fe-2S] cluster. Residue Asp82 coordinates Mg(2+). Cys123 provides a ligand contact to [2Fe-2S] cluster. The Mg(2+) site is built by Asp124 and Lys125. An N6-carboxylysine modification is found at Lys125. Cys195 contacts [2Fe-2S] cluster. Residue Glu447 participates in Mg(2+) binding. Ser473 acts as the Proton acceptor in catalysis.

It belongs to the IlvD/Edd family. In terms of assembly, homodimer. [2Fe-2S] cluster serves as cofactor. Requires Mg(2+) as cofactor.

It carries out the reaction (2R)-2,3-dihydroxy-3-methylbutanoate = 3-methyl-2-oxobutanoate + H2O. It catalyses the reaction (2R,3R)-2,3-dihydroxy-3-methylpentanoate = (S)-3-methyl-2-oxopentanoate + H2O. It functions in the pathway amino-acid biosynthesis; L-isoleucine biosynthesis; L-isoleucine from 2-oxobutanoate: step 3/4. The protein operates within amino-acid biosynthesis; L-valine biosynthesis; L-valine from pyruvate: step 3/4. Its function is as follows. Functions in the biosynthesis of branched-chain amino acids. Catalyzes the dehydration of (2R,3R)-2,3-dihydroxy-3-methylpentanoate (2,3-dihydroxy-3-methylvalerate) into 2-oxo-3-methylpentanoate (2-oxo-3-methylvalerate) and of (2R)-2,3-dihydroxy-3-methylbutanoate (2,3-dihydroxyisovalerate) into 2-oxo-3-methylbutanoate (2-oxoisovalerate), the penultimate precursor to L-isoleucine and L-valine, respectively. The protein is Dihydroxy-acid dehydratase of Ralstonia nicotianae (strain ATCC BAA-1114 / GMI1000) (Ralstonia solanacearum).